A 129-amino-acid polypeptide reads, in one-letter code: Large ribosomal subunit protein bL17 (129 aa).

Belongs to the bacterial ribosomal protein bL17 family. Part of the 50S ribosomal subunit. Contacts protein L32.

The chain is Large ribosomal subunit protein bL17 from Yersinia enterocolitica serotype O:8 / biotype 1B (strain NCTC 13174 / 8081).